A 305-amino-acid chain; its full sequence is Acetylglutamate kinase (305 aa).

Substrate-binding positions include 80 to 81 (GG), Arg102, and Asn196.

This sequence belongs to the acetylglutamate kinase family. ArgB subfamily.

Its subcellular location is the cytoplasm. It carries out the reaction N-acetyl-L-glutamate + ATP = N-acetyl-L-glutamyl 5-phosphate + ADP. It participates in amino-acid biosynthesis; L-arginine biosynthesis; N(2)-acetyl-L-ornithine from L-glutamate: step 2/4. In terms of biological role, catalyzes the ATP-dependent phosphorylation of N-acetyl-L-glutamate. The polypeptide is Acetylglutamate kinase (Chlorobium luteolum (strain DSM 273 / BCRC 81028 / 2530) (Pelodictyon luteolum)).